The primary structure comprises 474 residues: tRNA-2-methylthio-N(6)-dimethylallyladenosine synthase (474 aa).

Residues 3–120 (KKLHIKTWGC…LPEMINSVRG (118 aa)) form the MTTase N-terminal domain. [4Fe-4S] cluster contacts are provided by C12, C49, C83, C157, C161, and C164. In terms of domain architecture, Radical SAM core spans 143–375 (RAEGPTAFVS…QERINQQAMA (233 aa)). The TRAM domain occupies 378–441 (RRMLGTVQRI…TNSLRGKVVR (64 aa)).

Belongs to the methylthiotransferase family. MiaB subfamily. Monomer. The cofactor is [4Fe-4S] cluster.

It localises to the cytoplasm. It catalyses the reaction N(6)-dimethylallyladenosine(37) in tRNA + (sulfur carrier)-SH + AH2 + 2 S-adenosyl-L-methionine = 2-methylsulfanyl-N(6)-dimethylallyladenosine(37) in tRNA + (sulfur carrier)-H + 5'-deoxyadenosine + L-methionine + A + S-adenosyl-L-homocysteine + 2 H(+). Its function is as follows. Catalyzes the methylthiolation of N6-(dimethylallyl)adenosine (i(6)A), leading to the formation of 2-methylthio-N6-(dimethylallyl)adenosine (ms(2)i(6)A) at position 37 in tRNAs that read codons beginning with uridine. This chain is tRNA-2-methylthio-N(6)-dimethylallyladenosine synthase, found in Citrobacter koseri (strain ATCC BAA-895 / CDC 4225-83 / SGSC4696).